A 435-amino-acid polypeptide reads, in one-letter code: MDFEYIYPIIVLFGSFAIILAVGVPITFAIGLSSLFSILIALPPDAAISVISQKMTVGLDGFTLLAIPFFVLAGNIMNTGGIARRLVNLAQALVGRLPGSLAHCNILANTLFGAISGSAVASAAAVGGIMSPLQEKEGYSPAFSTAINVASAPIGLMIPPSNVLIVYSLASGGTSVAALFLAGYLPGILTALALMTVAALYAHRHHYPVAERINLRQFLSVFRDSLPSLLLIFIIIGGIIGGVFTPTEASAIAVIYSLALAAIYREINVSKLRDILLDSVVTSSIVLLLVGCSMGMSWAMTNADVPELINEMITSVSENKWVILLIINLILLFVGTFMDITPAILIFTPIFLPIAQHLGIDPVHFGIIMVFNLTIGLCTPPVGTILFVGCSIGKISIDKVVKPLLPMFLALFVVMAMICYFPQLSLLLPTLFAPS.

Helical transmembrane passes span 9–29, 57–77, 110–130, 146–166, 176–196, 226–246, 280–300, 321–341, 343–363, 367–387, and 408–428; these read IIVL…ITFA, VGLD…GNIM, TLFG…GGIM, AINV…VLIV, VAAL…ALMT, LPSL…VFTP, VVTS…SWAM, WVIL…MDIT, AILI…IDPV, IIMV…TILF, and FLAL…SLLL.

This sequence belongs to the YiaN/YgiK family.

Its subcellular location is the cell inner membrane. This is an uncharacterized protein from Salmonella typhimurium (strain LT2 / SGSC1412 / ATCC 700720).